A 208-amino-acid chain; its full sequence is Redox-sensing transcriptional repressor Rex (208 aa).

The segment at residues 18 to 57 (IYYRYFKLLETDGIERIKSEQLAKLVAIPSATIRRDFSYI) is a DNA-binding region (H-T-H motif). 92–97 (GVGNLG) is a binding site for NAD(+).

The protein belongs to the transcriptional regulatory Rex family. As to quaternary structure, homodimer.

It is found in the cytoplasm. In terms of biological role, modulates transcription in response to changes in cellular NADH/NAD(+) redox state. This Latilactobacillus sakei subsp. sakei (strain 23K) (Lactobacillus sakei subsp. sakei) protein is Redox-sensing transcriptional repressor Rex.